A 160-amino-acid chain; its full sequence is Transcription elongation factor GreA (160 aa).

The stretch at 49–75 (SEYDEAKNDQAFTEGRIIQLENMLKNA) forms a coiled coil.

Belongs to the GreA/GreB family.

Functionally, necessary for efficient RNA polymerase transcription elongation past template-encoded arresting sites. The arresting sites in DNA have the property of trapping a certain fraction of elongating RNA polymerases that pass through, resulting in locked ternary complexes. Cleavage of the nascent transcript by cleavage factors such as GreA or GreB allows the resumption of elongation from the new 3'terminus. GreA releases sequences of 2 to 3 nucleotides. The protein is Transcription elongation factor GreA of Clostridium beijerinckii (strain ATCC 51743 / NCIMB 8052) (Clostridium acetobutylicum).